Reading from the N-terminus, the 200-residue chain is NADH-quinone oxidoreductase subunit C (200 aa).

The protein belongs to the complex I 30 kDa subunit family. In terms of assembly, NDH-1 is composed of 14 different subunits. Subunits NuoB, C, D, E, F, and G constitute the peripheral sector of the complex.

It localises to the cell inner membrane. It catalyses the reaction a quinone + NADH + 5 H(+)(in) = a quinol + NAD(+) + 4 H(+)(out). NDH-1 shuttles electrons from NADH, via FMN and iron-sulfur (Fe-S) centers, to quinones in the respiratory chain. The immediate electron acceptor for the enzyme in this species is believed to be ubiquinone. Couples the redox reaction to proton translocation (for every two electrons transferred, four hydrogen ions are translocated across the cytoplasmic membrane), and thus conserves the redox energy in a proton gradient. This Paraburkholderia phytofirmans (strain DSM 17436 / LMG 22146 / PsJN) (Burkholderia phytofirmans) protein is NADH-quinone oxidoreductase subunit C.